Consider the following 883-residue polypeptide: Puromycin-sensitive aminopeptidase (883 aa).

Residues Glu125 and 265–269 (GAMEN) contribute to the substrate site. His301 lines the Zn(2+) pocket. The Proton acceptor role is filled by Glu302. 2 residues coordinate Zn(2+): His305 and Glu324.

It belongs to the peptidase M1 family. Zn(2+) serves as cofactor.

The enzyme catalyses Release of an N-terminal amino acid, preferentially alanine, from a wide range of peptides, amides and arylamides.. With respect to regulation, strongly inhibited by puromycin and DAMPAQ-22. Aminopeptidase with broad substrate specificity for several peptides. Involved in proteolytic events essential for cell growth and viability. Plays an essential role during prophase I of meiosis. Required for correct meiotic reconbination in both male and female gametophytes. The polypeptide is Puromycin-sensitive aminopeptidase (MPA1) (Arabidopsis thaliana (Mouse-ear cress)).